A 692-amino-acid polypeptide reads, in one-letter code: FMR1-interacting protein NUFIP2 (692 aa).

The tract at residues 1 to 100 (MEEKPGQPQP…KKTGYGEING (100 aa)) is disordered. 2 stretches are compositionally biased toward basic residues: residues 11-23 (QHHHSHHHPHHHP) and 31-54 (SHHHHHYYFYNHSHNHHHHHHHQQ). Lys-79 is covalently cross-linked (Glycyl lysine isopeptide (Lys-Gly) (interchain with G-Cter in SUMO2)). Thr-88 is modified (phosphothreonine). Lys-110 is covalently cross-linked (Glycyl lysine isopeptide (Lys-Gly) (interchain with G-Cter in SUMO2)). Phosphoserine occurs at positions 113 and 114. Glycyl lysine isopeptide (Lys-Gly) (interchain with G-Cter in SUMO2) cross-links involve residues Lys-137, Lys-147, Lys-158, and Lys-172. The interval 205–233 (SKGADNDGSGSESGYTTPKKRKARRNSAK) is disordered. Residues Ser-213 and Ser-215 each carry the phosphoserine modification. Tyr-219 carries the post-translational modification Phosphotyrosine. Thr-220 and Thr-221 each carry phosphothreonine. The segment covering 222 to 231 (PKKRKARRNS) has biased composition (basic residues). Glycyl lysine isopeptide (Lys-Gly) (interchain with G-Cter in SUMO2) cross-links involve residues Lys-262 and Lys-281. Disordered regions lie at residues 277 to 337 (KPIW…WTLF) and 369 to 401 (TVQNSSVSPSSSSSSSSTGETQTQSSSRLSQVP). Position 291 is an omega-N-methylarginine (Arg-291). A Glycyl lysine isopeptide (Lys-Gly) (interchain with G-Cter in SUMO2) cross-link involves residue Lys-293. At Ser-304 the chain carries Phosphoserine. Lys-307 is covalently cross-linked (Glycyl lysine isopeptide (Lys-Gly) (interchain with G-Cter in SUMO2)). Residues 371–395 (QNSSVSPSSSSSSSSTGETQTQSSS) are compositionally biased toward low complexity. Phosphoserine is present on Ser-376. Thr-569 is subject to Phosphothreonine. Phosphoserine occurs at positions 570, 589, 605, and 626. At Thr-630 the chain carries Phosphothreonine. Residues Ser-634, Ser-649, Ser-652, and Ser-689 each carry the phosphoserine modification.

As to quaternary structure, interacts with FMR1 (via N-terminus). Interacts with DDX6.

The protein resides in the nucleus. Its subcellular location is the cytoplasm. It localises to the stress granule. In terms of biological role, binds RNA. This Mus musculus (Mouse) protein is FMR1-interacting protein NUFIP2 (Nufip2).